Here is a 369-residue protein sequence, read N- to C-terminus: UDP-N-acetylglucosamine--N-acetylmuramyl-(pentapeptide) pyrophosphoryl-undecaprenol N-acetylglucosamine transferase (369 aa).

UDP-N-acetyl-alpha-D-glucosamine is bound by residues 15–17 (TGG), Asn-126, Arg-169, Ser-197, and Gln-299.

The protein belongs to the glycosyltransferase 28 family. MurG subfamily.

The protein localises to the cell inner membrane. The catalysed reaction is di-trans,octa-cis-undecaprenyl diphospho-N-acetyl-alpha-D-muramoyl-L-alanyl-D-glutamyl-meso-2,6-diaminopimeloyl-D-alanyl-D-alanine + UDP-N-acetyl-alpha-D-glucosamine = di-trans,octa-cis-undecaprenyl diphospho-[N-acetyl-alpha-D-glucosaminyl-(1-&gt;4)]-N-acetyl-alpha-D-muramoyl-L-alanyl-D-glutamyl-meso-2,6-diaminopimeloyl-D-alanyl-D-alanine + UDP + H(+). It participates in cell wall biogenesis; peptidoglycan biosynthesis. Cell wall formation. Catalyzes the transfer of a GlcNAc subunit on undecaprenyl-pyrophosphoryl-MurNAc-pentapeptide (lipid intermediate I) to form undecaprenyl-pyrophosphoryl-MurNAc-(pentapeptide)GlcNAc (lipid intermediate II). The polypeptide is UDP-N-acetylglucosamine--N-acetylmuramyl-(pentapeptide) pyrophosphoryl-undecaprenol N-acetylglucosamine transferase (Methylorubrum extorquens (strain CM4 / NCIMB 13688) (Methylobacterium extorquens)).